A 104-amino-acid polypeptide reads, in one-letter code: MAIKKSNKAALSQAASLKQILKRCSSLGKKNQGNCYFNDVPKGHFPVYVGQHRSRYVVPISWLDHHEFQSLLQLAEEEFGFEHEMGLTIPCDEVVFRSLISMFR.

It belongs to the ARG7 family. In terms of assembly, interacts with and inhibits PP2C-D subfamily of type 2C phosphatases such as PP2C67/PP2C-D1. As to expression, expressed in etiolated hypocotyls, petioles, leaves and flowers.

The protein localises to the cell membrane. In terms of biological role, provide a mechanistic link between auxin and plasma membrane H(+)-ATPases (PM H(+)-ATPases, e.g. AHA1 and AHA2), and triggers PM H(+)-ATPases activity by promoting phosphorylation of their C-terminal autoinhibitory domain as a result of PP2C-D subfamily of type 2C phosphatases inhibition, thus leading to the acidification of the apoplast and the facilitation of solutes and water uptake to drive cell expansion. Triggers plant growth probably by promoting cell elongation. Regulates branch angles and bending. Probably involved in light intensity mediated root development. This chain is Protein SMALL AUXIN UP-REGULATED RNA 9, found in Arabidopsis thaliana (Mouse-ear cress).